Reading from the N-terminus, the 759-residue chain is Cullin-4A (759 aa).

Lysine 8 participates in a covalent cross-link: Glycyl lysine isopeptide (Lys-Gly) (interchain with G-Cter in SUMO2). A Phosphoserine modification is found at serine 10. Residue lysine 33 forms a Glycyl lysine isopeptide (Lys-Gly) (interchain with G-Cter in ubiquitin) linkage. The 61-residue stretch at 691–751 folds into the Cullin neddylation domain; that stretch reads DRQYQIDAAI…RDYMERDKDN (61 aa). A Glycyl lysine isopeptide (Lys-Gly) (interchain with G-Cter in NEDD8) cross-link involves residue lysine 705.

Belongs to the cullin family. As to quaternary structure, can self-associate. Component of multiple DCX (DDB1-CUL4-X-box) E3 ubiquitin-protein ligase complexes that seem to consist of DDB1, CUL4A or CUL4B, RBX1 and a variable substrate recognition component which seems to belong to a protein family described as DCAF (Ddb1- and Cul4-associated factor) or CDW (CUL4-DDB1-associated WD40-repeat) proteins. Component of the CSA complex (DCX(ERCC8) complex) containing ERCC8, RBX1, DDB1 and CUL4A; the CSA complex interacts with RNA polymerase II; upon UV irradiation it interacts with the COP9 signalosome and preferentially with the hyperphosphorylated form of RNA polymerase II. Component of the DCX(DET1-COP1) complex with the substrate recognition component DET1 and COP1. Component of the DCX(DDB2) complex with the substrate recognition component DDB2. Component of the DCX(DTL) complex with the putative substrate recognition component DTL. Component of DCX complexes part of the DesCEND (destruction via C-end degrons) pathway, which contain either TRPC4AP or DCAF12 as substrate-recognition component. Component of the DCX(AMBRA1) complex with the substrate recognition component AMBRA1. Interacts with DDB1, RBX1, RNF7, CDT1, TIP120A/CAND1, SKP2, CDKN1B, MDM2, TP53 and HOXA9. Interacts with DDB2; the interactions with DDB2 and CAND1 are mutually exclusive. Interacts with DCAF1, DTL, DDA1, DCAF6, DCAF4, DCAF16, DCAF17, DET1, WDTC1, DCAF5, DCAF11, WDR24A, COP1, PAFAH1B1, ERCC8, GRWD1, FBXW5, RBBP7, GNB2, WSB1, WSB2, NUP43, PWP1, FBXW8, ATG16L1, KATNB1, RBBP4, RBBP5, LRWD1 and DCAF8. May interact with WDR26, WDR51B, SNRNP40, WDR61, WDR76, WDR5. Interacts (when neddylated) with ARIH1; leading to activate the E3 ligase activity of ARIH1. The DDB1-CUL4A complex interacts with CRY1. Interacts (unneddylated form) with DCUN1D1, DCUN1D2, DCUN1D3, DCUN1D4 and DCUN1D5; these interactions promote the cullin neddylation. (Microbial infection) Interacts with Epstein-Barr virus BPLF1. In terms of processing, neddylated; required for activity of cullin-RING-based E3 ubiquitin-protein ligase complexes. Deneddylated via its interaction with the COP9 signalosome (CSN) complex. Post-translationally, (Microbial infection) Deneddylated by Epstein-Barr virus BPLF1 leading to a S-phase-like environment that is required for efficient replication of the viral genome.

It participates in protein modification; protein ubiquitination. In terms of biological role, core component of multiple cullin-RING-based E3 ubiquitin-protein ligase complexes which mediate the ubiquitination of target proteins. As a scaffold protein may contribute to catalysis through positioning of the substrate and the ubiquitin-conjugating enzyme. The E3 ubiquitin-protein ligase activity of the complex is dependent on the neddylation of the cullin subunit and is inhibited by the association of the deneddylated cullin subunit with TIP120A/CAND1. The functional specificity of the E3 ubiquitin-protein ligase complex depends on the variable substrate recognition component. DCX(DET1-COP1) directs ubiquitination of JUN. DCX(DDB2) directs ubiquitination of XPC. DCX(DDB2) ubiquitinates histones H3-H4 and is required for efficient histone deposition during replication-coupled (H3.1) and replication-independent (H3.3) nucleosome assembly, probably by facilitating the transfer of H3 from ASF1A/ASF1B to other chaperones involved in histone deposition. DCX(DTL) plays a role in PCNA-dependent polyubiquitination of CDT1 and MDM2-dependent ubiquitination of p53/TP53 in response to radiation-induced DNA damage and during DNA replication. DCX(DTL) directs autoubiquitination of DTL. In association with DDB1 and SKP2 probably is involved in ubiquitination of CDKN1B/p27kip. Is involved in ubiquitination of HOXA9. The DDB1-CUL4A-DTL E3 ligase complex regulates the circadian clock function by mediating the ubiquitination and degradation of CRY1. The DCX(ERCC8) complex (also named CSA complex) plays a role in transcription-coupled repair (TCR). A number of DCX complexes (containing either TRPC4AP or DCAF12 as substrate-recognition component) are part of the DesCEND (destruction via C-end degrons) pathway, which recognizes a C-degron located at the extreme C terminus of target proteins, leading to their ubiquitination and degradation. The DCX(AMBRA1) complex is a master regulator of the transition from G1 to S cell phase by mediating ubiquitination of phosphorylated cyclin-D (CCND1, CCND2 and CCND3). The DCX(AMBRA1) complex also acts as a regulator of Cul5-RING (CRL5) E3 ubiquitin-protein ligase complexes by mediating ubiquitination and degradation of Elongin-C (ELOC) component of CRL5 complexes. With CUL4B, contributes to ribosome biogenesis. The sequence is that of Cullin-4A from Homo sapiens (Human).